The chain runs to 126 residues: Histone H2B-alpha (126 aa).

A disordered region spans residues 1-34 (MSAAEKKPASKAPAGKAPRDTMKSADKKRGKNRK). An N6-acetyllysine; alternate mark is found at Lys6 and Lys7. Residues Lys6 and Lys7 each participate in a glycyl lysine isopeptide (Lys-Gly) (interchain with G-Cter in SUMO); alternate cross-link. Phosphoserine is present on Ser10. Residue Lys11 is modified to N6-acetyllysine. Over residues 17-27 (APRDTMKSADK) the composition is skewed to basic and acidic residues. Lys120 participates in a covalent cross-link: Glycyl lysine isopeptide (Lys-Gly) (interchain with G-Cter in ubiquitin).

This sequence belongs to the histone H2B family. The nucleosome is a histone octamer containing two molecules each of H2A, H2B, H3 and H4 assembled in one H3-H4 heterotetramer and two H2A-H2B heterodimers. The octamer wraps approximately 147 bp of DNA. Interacts with rik1. In terms of processing, monoubiquitinated by the rhp6/ubc2-bre1 complex to form H2BK123ub1. H2BK123ub1 gives a specific tag for epigenetic transcriptional activation and is also prerequisite for H3K4me and H3K79me formation. H2BK123ub1 also modulates the formation of double-strand breaks during meiosis and is a prerequisite for DNA-damage checkpoint activation. Phosphorylated by shk1 to form H2BS10ph during progression through meiotic prophase. May be correlated with chromosome condensation. Post-translationally, acetylation of N-terminal lysines and particularly formation of H2BK11ac has a positive effect on transcription. In terms of processing, sumoylation to form H2BK6su or H2BK7su occurs preferentially near the telomeres and represses gene transcription.

The protein resides in the nucleus. It is found in the chromosome. Functionally, core component of nucleosome. Nucleosomes wrap and compact DNA into chromatin, limiting DNA accessibility to the cellular machineries which require DNA as a template. Histones thereby play a central role in transcription regulation, DNA repair, DNA replication and chromosomal stability. DNA accessibility is regulated via a complex set of post-translational modifications of histones, also called histone code, and nucleosome remodeling. The sequence is that of Histone H2B-alpha (htb1) from Schizosaccharomyces pombe (strain 972 / ATCC 24843) (Fission yeast).